The sequence spans 200 residues: Mediator of RNA polymerase II transcription subunit 22 (200 aa).

Positions 93 to 123 form a coiled coil; the sequence is SVNDAISLQNQQLRSLQEECDKKLISLRDEI. Positions 159 to 200 are disordered; the sequence is ASPSSSSSSTQGDQEEVEILPSQETEPQHHLNGQGTSSLEKM. Over residues 189 to 200 the composition is skewed to polar residues; sequence LNGQGTSSLEKM.

It belongs to the Mediator complex subunit 22 family. In terms of assembly, component of the Mediator complex.

It localises to the nucleus. In terms of biological role, component of the Mediator complex, a coactivator involved in the regulated transcription of nearly all RNA polymerase II-dependent genes. Mediator functions as a bridge to convey information from gene-specific regulatory proteins to the basal RNA polymerase II transcription machinery. Mediator is recruited to promoters by direct interactions with regulatory proteins and serves as a scaffold for the assembly of a functional preinitiation complex with RNA polymerase II and the general transcription factors. This is Mediator of RNA polymerase II transcription subunit 22 (med22) from Takifugu rubripes (Japanese pufferfish).